Reading from the N-terminus, the 524-residue chain is AAA ATPase forming ring-shaped complexes (524 aa).

The tract at residues 1-29 is disordered; it reads MGMGQEKHTDAASQSRDPEAVAAHENDQL. Residues 22–59 are a coiled coil; it reads AAHENDQLRQRNHALAKALTRATEELRKAKAQLEQFMA. 250–255 provides a ligand contact to ATP; that stretch reads GNGKTL.

This sequence belongs to the AAA ATPase family. As to quaternary structure, homohexamer. Assembles into a hexameric ring structure.

In Bifidobacterium animalis subsp. lactis (strain BB-12), this protein is AAA ATPase forming ring-shaped complexes.